The chain runs to 329 residues: UDP-sugar transporter sqv-7 (329 aa).

The next 9 helical transmembrane spans lie at 15-34 (SAVF…KILL), 41-63 (SFLF…AKMF), 86-108 (YFFN…FTVL), 129-151 (SKAV…IYDL), 155-174 (ALGY…LGVY), 187-209 (YGLM…QYTG), 224-246 (TSSV…YSLV), 253-275 (SALT…GMFS), and 280-302 (VFQW…YTYV).

It belongs to the TPT transporter family. SLC35D subfamily.

It localises to the golgi apparatus membrane. Functionally, acts as a transporter of UDP-glucuronic acid (UDP-GlcA), UDP-N-acetylgalactosamine (UDP-GalNAc) and UDP-galactose (UDP-Gal) from the cytoplasm into the Golgi lumen. Involved in the biosynthesis of glycoconjugates that play a pivotal role in development. Involved in the synthesis of chondroitin sulfate and heparan sulfate proteoglycans. Required for embryonic development. Involved in vulva epithelium invagination and embryonic development. Involved in the directed migration of hermaphrodite-specific neurons. This Caenorhabditis elegans protein is UDP-sugar transporter sqv-7 (sqv-7).